Here is a 78-residue protein sequence, read N- to C-terminus: Metallothionein-like protein type 2 (78 aa).

It belongs to the metallothionein superfamily. Type 15 family.

In terms of biological role, metallothioneins have a high content of cysteine residues that bind various heavy metals. The chain is Metallothionein-like protein type 2 from Actinidia deliciosa (Kiwi).